Here is a 141-residue protein sequence, read N- to C-terminus: Hemoglobin subunit alpha-1/2 (141 aa).

The region spanning 1–141 (VLSPTDKTNV…VSTVLTSKYR (141 aa)) is the Globin domain. Residue Ser3 is modified to Phosphoserine. An N6-succinyllysine modification is found at Lys7. Phosphothreonine is present on Thr8. Lys11 is subject to N6-succinyllysine. An N6-acetyllysine; alternate modification is found at Lys16. An N6-succinyllysine; alternate modification is found at Lys16. Phosphotyrosine is present on Tyr24. Lys40 carries the N6-succinyllysine modification. Ser49 is subject to Phosphoserine. His58 contributes to the O2 binding site. His87 contacts heme b. Phosphoserine is present on Ser102. A Phosphothreonine modification is found at Thr108. Phosphoserine is present on Ser124. Residues Thr134 and Thr137 each carry the phosphothreonine modification. Ser138 is subject to Phosphoserine.

It belongs to the globin family. Heterotetramer of two alpha chains and two beta chains. In terms of tissue distribution, red blood cells.

In terms of biological role, involved in oxygen transport from the lung to the various peripheral tissues. This Tapirus terrestris (Lowland tapir) protein is Hemoglobin subunit alpha-1/2.